Consider the following 2769-residue polypeptide: Thyroglobulin (2769 aa).

Positions 1-19 (MALALWVFGLLDLICLASA) are cleaved as a signal peptide. The residue at position 24 (Y24) is an Iodotyrosine; alternate. At Y24 the chain carries Sulfotyrosine; alternate. Y24 is modified (thyroxine; alternate). The residue at position 24 (Y24) is a Triiodothyronine; alternate. Thyroglobulin type-1 domains follow at residues 31–92 (LRPC…PAAC), 93–160 (LSFC…PARC), 161–297 (PRSC…RFRC), and 298–358 (PTKC…PPSC). 8 disulfide bridges follow: C34/C52, C63/C70, C72/C92, C96/C120, C131/C138, C140/C160, C164/C183, and C194/C235. Y108 carries the iodotyrosine modification. An N-linked (GlcNAc...) (complex) asparagine; alternate glycan is attached at N110. A glycan (N-linked (GlcNAc...) (hybrid) asparagine; alternate) is linked at N110. Y149 is modified (iodotyrosine; alternate). Diiodotyrosine; alternate is present on Y149. 2 positions are modified to iodotyrosine: Y234 and Y258. Intrachain disulfides connect C301-C319, C330-C336, C338-C358, C364-C619, C408-C607, C630-C635, C637-C657, C661-C686, and C697-C702. 2 N-linked (GlcNAc...) (complex) asparagine; alternate glycosylation sites follow: N483 and N495. 2 N-linked (GlcNAc...) (hybrid) asparagine; alternate glycosylation sites follow: N483 and N495. 6 consecutive Thyroglobulin type-1 domains span residues 604 to 657 (SQGC…RPRC), 658 to 725 (PTEC…PKKC), 726 to 921 (PSPC…VPAC), 922 to 1073 (PGSC…IPQC), 1074 to 1145 (PTSC…SAQC), and 1146 to 1210 (PSLC…QPAC). Y703 carries the iodotyrosine; alternate modification. Y703 is subject to Thyroxine; alternate. Y703 is subject to Triiodothyronine; alternate. Residue Y703 is modified to Diiodotyrosine; alternate. 16 disulfide bridges follow: C704-C725, C729-C762, C773-C898, C900-C921, C925-C1031, C1042-C1049, C1051-C1073, C1077-C1108, C1126-C1145, C1149-C1169, C1181-C1188, C1190-C1210, C1215-C1264, C1231-C1245, C1306-C1356, and C1331-C1347. An Iodotyrosine modification is found at Y784. N-linked (GlcNAc...) (complex) asparagine; alternate glycosylation is present at N853. N-linked (GlcNAc...) (hybrid) asparagine; alternate glycosylation occurs at N853. Y866 carries the iodotyrosine; alternate modification. Y866 carries the diiodotyrosine; alternate modification. Diiodotyrosine is present on Y883. N947 is a glycosylation site (N-linked (GlcNAc...) (complex) asparagine; alternate). N-linked (GlcNAc...) (hybrid) asparagine; alternate glycosylation occurs at N947. An Iodotyrosine; alternate modification is found at Y992. Position 992 is a diiodotyrosine; alternate (Y992). N-linked (GlcNAc...) (complex) asparagine; alternate glycosylation is present at N1140. The N-linked (GlcNAc...) (hybrid) asparagine; alternate glycan is linked to N1140. Y1310 is subject to Iodotyrosine. Y1310 carries the post-translational modification Thyroxine. N1365 is a glycosylation site (N-linked (GlcNAc...) (high mannose) asparagine). 13 cysteine pairs are disulfide-bonded: C1441–C1461, C1464–C1475, C1478–C1492, C1495–C1512, C1516–C1525, C1545–C1567, C1605–C1629, C1609–C1615, C1641–C1664, C1726–C1751, C1730–C1736, C1735–C1836, and C1762–C1779. Type II repeat units follow at residues 1458 to 1471 (ALGCVKCPEGSYFQ), 1472 to 1488 (DEQCIPCPAGFYQEQAG), and 1489 to 1505 (SLACVPCPEGRTTVYAG). Position 1469 is an iodotyrosine; alternate (Y1469). At Y1469 the chain carries Diiodotyrosine; alternate. The Thyroglobulin type-1 11 domain maps to 1513 to 1567 (VTDCQKNEVGLQCDQDSQYRASQRDRTSGKAFCVDGEGRRLPWTEAEAPLVDAQC). The Type IIIA repeat unit spans residues 1605–1725 (CLADCALDEA…GASLAEVHLF (121 aa)). The stretch at 1726–1893 (CLLACDHDSC…LFSLQQANLW (168 aa)) is one Type IIIB repeat. A glycan (N-linked (GlcNAc...) (complex) asparagine; alternate) is linked at N1776. N1776 carries an N-linked (GlcNAc...) (hybrid) asparagine; alternate glycan. Basic and acidic residues predominate over residues 1827–1842 (MGSRSESMGCRRDTEP). Residues 1827 to 1851 (MGSRSESMGCRRDTEPRPASPSETD) are disordered. N1870 is a glycosylation site (N-linked (GlcNAc...) (complex) asparagine; alternate). The N-linked (GlcNAc...) (hybrid) asparagine; alternate glycan is linked to N1870. 7 disulfide bridges follow: C1894-C1920, C1898-C1905, C1929-C1940, C1997-C2025, C2001-C2007, C2006-C2077, and C2036-C2049. The stretch at 1894–1996 (CLSRCAGEPS…DKSISSGFFE (103 aa)) is one Type IIIA repeat. The stretch at 1997–2130 (CERLCDMDPC…VGNFSAARDR (134 aa)) is one Type IIIB repeat. An N-linked (GlcNAc...) (high mannose) asparagine glycan is attached at N2014. N-linked (GlcNAc...) (high mannose) asparagine glycosylation is present at N2123. Disulfide bonds link C2131–C2155, C2135–C2141, and C2164–C2173. The Type IIIA repeat unit spans residues 2131–2188 (CLWECSRHQDCLVTTLQTQPGAVRCMFYADTQSCTHSLQAQNCRLLLHEEATYIYRKP). Residue Y2185 is modified to Iodotyrosine. The cholinesterase-like (ChEL) stretch occupies residues 2189-2769 (NIPLPGFGTS…PELASKTYSK (581 aa)). N2251 is a glycosylation site (N-linked (GlcNAc...) (complex) asparagine; alternate). N2251 carries N-linked (GlcNAc...) (hybrid) asparagine; alternate glycosylation. The N-linked (GlcNAc...) (high mannose) asparagine glycan is linked to N2296. C2443 and C2454 form a disulfide bridge. Y2541 bears the Thyroxine mark. The residue at position 2574 (Y2574) is an Iodotyrosine; alternate. Y2574 is subject to Thyroxine; alternate. The residue at position 2574 (Y2574) is a Triiodothyronine; alternate. Y2574 is subject to Diiodotyrosine; alternate. Residues Y2588 and Y2618 each carry the iodotyrosine modification. C2592 and C2716 form a disulfide bridge. A Diiodotyrosine modification is found at Y2698. The segment at 2730–2769 (ADETKDGPSADSEEEDQPAGSGLTEDLLGLPELASKTYSK) is disordered. Iodotyrosine; alternate is present on Y2767. The residue at position 2767 (Y2767) is a Thyroxine; alternate. A Triiodothyronine; alternate modification is found at Y2767. Y2767 bears the Diiodotyrosine; alternate mark.

It belongs to the type-B carboxylesterase/lipase family. In terms of assembly, monomer. Homodimer (via ChEL region); occurs in the endoplasmic reticulum and is required for export to the Golgi apparatus. Homooligomer; disulfide-linked; stored in this form in the thyroid follicle lumen. In terms of processing, iodinated on tyrosine residues by TPO. There are 4 pairs of iodinated tyrosines used for coupling: acceptor Tyr-24 is coupled to donor Tyr-149 or Tyr-234, acceptor Tyr-2574 is coupled to donor Tyr-2541, acceptor Tyr-2767 in monomer 1 is coupled to donor Tyr-2767 in monomer 2 and acceptor Tyr-1310 in monomer 1 is coupled to donor Tyr-108 in monomer 2. Post-translationally, sulfated tyrosines are desulfated during iodination. Undergoes sequential proteolysis by cathepsins to release thyroxine (T4) and triiodothyronine (T3) hormones. In the thyroid follicle lumen, cross-linked TG (storage form) is solubilized by limited proteolysis mediated by cathepsins CTSB and/or CTSL. Partially cleaved TG is further processed by CTSK/cathepsin K and/or CTSL resulting in the release of T4. Following endocytosis, further processing occurs leading to the release of T3 and more T4 hormones. As to expression, specifically expressed in the thyroid gland.

It is found in the secreted. Its function is as follows. Acts as a substrate for the production of iodinated thyroid hormones thyroxine (T4) and triiodothyronine (T3). The synthesis of T3 and T4 involves iodination of selected tyrosine residues of TG/thyroglobulin followed by their oxidative coupling. Following TG re-internalization and lysosomal-mediated proteolysis, T3 and T4 are released from the polypeptide backbone leading to their secretion into the bloodstream. One dimer produces 7 thyroid hormone molecules. In Bos taurus (Bovine), this protein is Thyroglobulin (TG).